Consider the following 267-residue polypeptide: Low affinity immunoglobulin gamma Fc region receptor III (267 aa).

A signal peptide spans 1-36 (MTLETQMFQNAHSGSQWLLPPLTMLLLFAFADRQTA). The Extracellular portion of the chain corresponds to 37-221 (NLPKAVVKRD…STSSLVWFHA (185 aa)). Ig-like C2-type domains lie at 39–121 (PKAV…EVIS) and 122–204 (DWLL…VTIT). Cystine bridges form between Cys62-Cys104 and Cys143-Cys187. Asn70, Asn78, Asn97, Asn171, and Asn178 each carry an N-linked (GlcNAc...) asparagine glycan. A helical membrane pass occupies residues 222–241 (AFCLVMCLLFAVDTGLYFCV). The Cytoplasmic portion of the chain corresponds to 242–267 (RRNLQTSGEDWRKSLSVGKYKAPQDK).

As to quaternary structure, may form multisubunit complex with other heteroproteins. This association is required for efficient cell-surface expression. Does not associate with CD3 zeta. In terms of tissue distribution, expressed on natural killer cells and macrophages.

The protein resides in the cell membrane. In terms of biological role, receptor for the Fc region of complexed immunoglobulins gamma. Low affinity receptor which binds to IgG1, IgG2a and IgG2b. Mediates neutrophil activation by IgG complexes redundantly with Fcgr4. The polypeptide is Low affinity immunoglobulin gamma Fc region receptor III (Fcgr3) (Rattus norvegicus (Rat)).